Reading from the N-terminus, the 231-residue chain is Aldehyde decarbonylase (231 aa).

E32, E60, H63, E115, and H147 together coordinate Fe cation.

It belongs to the aldehyde decarbonylase family. The cofactor is Binds 2 metal cations per subunit. The catalytic dinuclear metal-binding site could be either a di-iron or a manganese-iron cofactor..

The enzyme catalyses a long-chain fatty aldehyde + 2 NADPH + O2 + H(+) = a long-chain alkane + formate + 2 NADP(+) + H2O. Catalyzes the decarbonylation of fatty aldehydes to alkanes. Requires the presence of ferredoxin, ferredoxin reductase and NADPH for in vitro decarbonylase activity. Involved in the biosynthesis of alkanes, mainly heptadecane and pentadecane. The polypeptide is Aldehyde decarbonylase (Synechocystis sp. (strain ATCC 27184 / PCC 6803 / Kazusa)).